The sequence spans 187 residues: 1,6-anhydro-N-acetylmuramyl-L-alanine amidase AmpD (187 aa).

Positions 30–167 (LLVVHNISLP…APERKTDPGP (138 aa)) constitute an N-acetylmuramoyl-L-alanine amidase domain. A Zn(2+)-binding site is contributed by His-34. Catalysis depends on Glu-116, which acts as the Proton acceptor. Zn(2+)-binding residues include His-154 and Asp-164.

It belongs to the N-acetylmuramoyl-L-alanine amidase 2 family. Zn(2+) is required as a cofactor.

It is found in the cytoplasm. The catalysed reaction is Hydrolyzes the link between N-acetylmuramoyl residues and L-amino acid residues in certain cell-wall glycopeptides.. With respect to regulation, amidase activity is inhibited by metal chelators such as EDTA, dipicolinic acid or 1,10-phenanthroline. Involved in cell wall peptidoglycan recycling. Specifically cleaves the amide bond between the lactyl group of N-acetylmuramic acid and the alpha-amino group of the L-alanine in degradation products containing an anhydro N-acetylmuramyl moiety. Is also involved in beta-lactamase induction. In Citrobacter freundii, this protein is 1,6-anhydro-N-acetylmuramyl-L-alanine amidase AmpD.